Reading from the N-terminus, the 110-residue chain is Integration host factor subunit beta (110 aa).

This sequence belongs to the bacterial histone-like protein family. Heterodimer of an alpha and a beta chain.

Its function is as follows. This protein is one of the two subunits of integration host factor, a specific DNA-binding protein that functions in genetic recombination as well as in transcriptional and translational control. The protein is Integration host factor subunit beta of Parvibaculum lavamentivorans (strain DS-1 / DSM 13023 / NCIMB 13966).